We begin with the raw amino-acid sequence, 418 residues long: MKNNKISGFQWAMTIFVFFVITMALSIMLRDFQSIIGVKHFIFEVTDLAPLIAAIICILVFKYKKVQLAGLKFSISLKVIERLLLALILPLIILIIGMYSFNTFADSFILLQSTGLSVPITHILIGHILMAFVVEFGFRSYLQNIVETKMNTFFASIVVGLMYSVFSANTTYGTEFAAYNFLYTFSFSMILGELIRATKGRTIYIATTFHASMTFGLIFLFSEEIGDLFSIKVIAISTAIVAVGYIGLSLIIRGIAYLTTRRNLEELEPNNYLDHVNDDEETNHTRAEKSSSNIKDAEKTGVSTASTVGIAKSDTENTVADEPSIHEGTEKTEPQHHIDNQTESNHDEDHDITSESVESAESVKHTLQSDDLTNDSNEDEKQSLKEPATYKEDRRSSVVIDAEKHIEKTEEQSSDKNK.

Helical transmembrane passes span F9 to L29, F41 to F61, L84 to F104, V118 to F138, F153 to G173, E175 to I195, T202 to S222, and I231 to I251. Positions D274–K418 are disordered. Composition is skewed to basic and acidic residues over residues T282–K299, P323–T353, and D379–K418.

The protein belongs to the LyrA family. Interacts with N-acetylglucosaminidase SagB; interaction is direct and facilitates peptidoglycan processing. Interacts (via N-terminal region including transmembrane domains) with sensor protein kinase WalK (via N-terminal region including transmembrane domains). Interacts (via N-terminal region including transmembrane domains) with sensor protein kinase SaeS. Interacts with other histidine kinases, perhaps via their transmembrane domains.

The protein resides in the cell membrane. The protein localises to the secreted. It localises to the cell wall. It is found in the cell septum. Functionally, involved in bacterial cell envelope homeostasis. Regulates peptidoglycan processing by N-acetylglucosaminidase SagB, perhaps acting as a scaffold protein. Pleiotropic regulator of gene expression, probably acting via interactions with multiple two-component systems. Plays a role in the abundant deposition of the immunoglobulin G-binding protein A (spa) at the cross-wall, a subcellular structure that initially arises from cytokinesis. In Staphylococcus aureus (strain bovine RF122 / ET3-1), this protein is Lysostaphin resistance protein A (lyrA).